The following is a 116-amino-acid chain: Large ribosomal subunit protein bL17 (116 aa).

The protein belongs to the bacterial ribosomal protein bL17 family. Part of the 50S ribosomal subunit. Contacts protein L32.

The chain is Large ribosomal subunit protein bL17 from Helicobacter pylori (strain P12).